The primary structure comprises 738 residues: Flowering time control protein FCA (738 aa).

A disordered region spans residues 1 to 118 (MHRGGDRSTD…RGDHSDHDNR (118 aa)). 2 stretches are compositionally biased toward gly residues: residues 52-70 (RGGG…GGGR) and 81-98 (SGGG…GEPG). The segment covering 109-118 (RGDHSDHDNR) has biased composition (basic and acidic residues). 2 RRM domains span residues 122–203 (VKLF…YADG) and 213–293 (HKLF…FADP). Disordered regions lie at residues 292–414 (DPKR…GHHL) and 566–594 (QQSN…AIIP). A compositionally biased stretch (gly residues) spans 301–311 (SRGGPAFGGPG). Positions 342 to 358 (HPSSPRSAPHQFNNFGS) are enriched in polar residues. The segment covering 368-377 (TVTSTTDTAT) has biased composition (low complexity). Composition is skewed to polar residues over residues 383-401 (FSGN…SSHM) and 575-594 (PTQG…AIIP). Residues 609–642 (VPLTCNWTEHTSPEGFKYYYNSITRESKWDKPEE) form the WW domain. The interval 670–738 (MQQLQSPPQA…QSAQERAWKS (69 aa)) is disordered. Positions 683-706 (PAMQPVQQIPQAQQGQQQMQMKQQ) are enriched in low complexity. The span at 723–732 (RIQQGIQSAQ) shows a compositional bias: polar residues.

Interacts with FY. Binds to SF1, FIK, RPRD1B, Os09g0509000/LOC_Os09g33480 and MADS8. As to expression, mostly expressed in young flowers (panicles) and stems, and also present in young seedlings leaves and roots.

It is found in the nucleus. In terms of biological role, plays a major role in the promotion of the transition of the vegetative meristem to reproductive development. Required for RNA-mediated chromatin silencing of a range of loci in the genome. Cotranscriptionally recognizes aberrant RNA and marks it for silencing. Controls alternative cleavage and polyadenylation on pre-mRNAs and antisense RNAs. Regulates flowering time, seed size and cell volume, probably via the modulation of cell size. The protein is Flowering time control protein FCA of Oryza sativa subsp. japonica (Rice).